A 173-amino-acid polypeptide reads, in one-letter code: Alpha-crystallin A chain (173 aa).

Met-1 carries the N-acetylmethionine modification. Residues 1-63 (MDIAIQHPWF…RTVLDSGISE (63 aa)) are required for complex formation with BFSP1 and BFSP2. Gln-6 carries the post-translational modification Deamidated glutamine; partial. Position 45 is a phosphoserine (Ser-45). Residue Gln-50 is modified to Deamidated glutamine; partial. One can recognise a sHSP domain in the interval 52-162 (LFRTVLDSGI…GHSERAIPVS (111 aa)). N6-acetyllysine is present on Lys-70. Deamidated glutamine; partial is present on Gln-90. The residue at position 99 (Lys-99) is an N6-acetyllysine. His-100 contributes to the Zn(2+) binding site. At Asn-101 the chain carries Deamidated asparagine; partial. Glu-102 and His-107 together coordinate Zn(2+). At Ser-122 the chain carries Phosphoserine. Residue Asn-123 is modified to Deamidated asparagine; partial. The disordered stretch occupies residues 144–173 (PKIPSGVDAGHSERAIPVSREEKPSSAPSS). Basic and acidic residues predominate over residues 153 to 167 (GHSERAIPVSREEKP). Residue His-154 coordinates Zn(2+). An O-linked (GlcNAc) serine glycan is attached at Ser-162.

Belongs to the small heat shock protein (HSP20) family. In terms of assembly, heteromer composed of three CRYAA and one CRYAB subunits. Inter-subunit bridging via zinc ions enhances stability, which is crucial as there is no protein turn over in the lens. Can also form homodimers and homotetramers (dimers of dimers) which serve as the building blocks of homooligomers. Within homooligomers, the zinc-binding motif is created from residues of 3 different molecules. His-100 and Glu-102 from one molecule are ligands of the zinc ion, and His-107 and His-154 residues from additional molecules complete the site with tetrahedral coordination geometry. Part of a complex required for lens intermediate filament formation composed of BFSP1, BFSP2 and CRYAA. In terms of processing, acetylation at Lys-70 may increase chaperone activity. Undergoes age-dependent proteolytical cleavage at the C-terminus.

It localises to the cytoplasm. The protein localises to the nucleus. Its function is as follows. Contributes to the transparency and refractive index of the lens. Acts as a chaperone, preventing aggregation of various proteins under a wide range of stress conditions. Required for the correct formation of lens intermediate filaments as part of a complex composed of BFSP1, BFSP2 and CRYAA. The sequence is that of Alpha-crystallin A chain (CRYAA) from Giraffa camelopardalis (Giraffe).